The sequence spans 83 residues: Small ribosomal subunit protein bS18 (83 aa).

Positions 1–23 (MKQRNNAKRVRLEQTRRPKKNPL) are disordered.

Belongs to the bacterial ribosomal protein bS18 family. In terms of assembly, part of the 30S ribosomal subunit. Forms a tight heterodimer with protein bS6.

Its function is as follows. Binds as a heterodimer with protein bS6 to the central domain of the 16S rRNA, where it helps stabilize the platform of the 30S subunit. This is Small ribosomal subunit protein bS18 from Corynebacterium efficiens (strain DSM 44549 / YS-314 / AJ 12310 / JCM 11189 / NBRC 100395).